The primary structure comprises 566 residues: Alpha-amylase (566 aa).

The N-terminal stretch at Met-1–Ala-28 is a signal peptide. Ca(2+)-binding residues include Asn-120, Gln-166, and Asp-175. Catalysis depends on Asp-205, which acts as the Nucleophile. His-209 serves as a coordination point for Ca(2+). Glu-232 (proton donor) is an active-site residue. In terms of domain architecture, CBM20 spans Gly-465–Gly-566.

This sequence belongs to the glycosyl hydrolase 13 family. As to quaternary structure, monomer. Ca(2+) is required as a cofactor.

It catalyses the reaction Endohydrolysis of (1-&gt;4)-alpha-D-glucosidic linkages in polysaccharides containing three or more (1-&gt;4)-alpha-linked D-glucose units.. In Streptomyces griseus, this protein is Alpha-amylase (amy).